Here is a 152-residue protein sequence, read N- to C-terminus: Ribosome maturation factor RimP (152 aa).

This sequence belongs to the RimP family.

It is found in the cytoplasm. Required for maturation of 30S ribosomal subunits. This Citrobacter koseri (strain ATCC BAA-895 / CDC 4225-83 / SGSC4696) protein is Ribosome maturation factor RimP.